A 127-amino-acid polypeptide reads, in one-letter code: DNA-directed RNA polymerase subunit omega (127 aa).

This sequence belongs to the RNA polymerase subunit omega family. As to quaternary structure, the RNAP catalytic core consists of 2 alpha, 1 beta, 1 beta' and 1 omega subunit. When a sigma factor is associated with the core the holoenzyme is formed, which can initiate transcription.

It catalyses the reaction RNA(n) + a ribonucleoside 5'-triphosphate = RNA(n+1) + diphosphate. Functionally, promotes RNA polymerase assembly. Latches the N- and C-terminal regions of the beta' subunit thereby facilitating its interaction with the beta and alpha subunits. The protein is DNA-directed RNA polymerase subunit omega of Rickettsia africae (strain ESF-5).